The chain runs to 152 residues: Large ribosomal subunit protein uL15 (152 aa).

A disordered region spans residues 1–55 (MRLHELKPNEGATHKKKRVGRGIGSGHGKTSTKGQKGQTSRSGDSKLPARFEGGQ). Over residues 28 to 42 (GKTSTKGQKGQTSRS) the composition is skewed to polar residues.

The protein belongs to the universal ribosomal protein uL15 family. In terms of assembly, part of the 50S ribosomal subunit.

In terms of biological role, binds to the 23S rRNA. This chain is Large ribosomal subunit protein uL15, found in Sulfurihydrogenibium sp. (strain YO3AOP1).